Reading from the N-terminus, the 549-residue chain is 4-hydroxybutyrate--CoA ligase 2 (549 aa).

Residues 195–203, 336–341, aspartate 425, and arginine 440 each bind ATP; these read TSGTTGLPK and ETYGPH. CoA is bound by residues 448 to 450, lysine 506, and 514 to 516; these read GGE and CPK. Lysine 530 contacts ATP.

It belongs to the ATP-dependent AMP-binding enzyme family. It depends on Mg(2+) as a cofactor. Mn(2+) is required as a cofactor.

The catalysed reaction is 4-hydroxybutanoate + ATP + CoA = 4-hydroxybutanoyl-CoA + AMP + diphosphate. It catalyses the reaction acetate + ATP + CoA = acetyl-CoA + AMP + diphosphate. The enzyme catalyses propanoate + ATP + CoA = propanoyl-CoA + AMP + diphosphate. It carries out the reaction a medium-chain fatty acid + ATP + CoA = a medium-chain fatty acyl-CoA + AMP + diphosphate. Its function is as follows. Catalyzes the ligation of coenzyme A (CoA) to 4-hydroxybutyrate (4HB). It can also use butyrate, valerate, propionate, acetate and 3-hydroxybutyrate (3HB) as substrates. The sequence is that of 4-hydroxybutyrate--CoA ligase 2 from Metallosphaera sedula (strain ATCC 51363 / DSM 5348 / JCM 9185 / NBRC 15509 / TH2).